A 497-amino-acid chain; its full sequence is MSFITKAACVGGGVIGGAWVARFALAGIDVKIFDPHPEAERIIGEVMANAERAYAMLTMAPLPPKGKLTFCKSIEEAVEGADWIQESVPERLELKRGVITKIDAAARPDALIGSSTSGLLPSDLQSEMHHPERMFVAHPYNPVYLLPLVELVGGKKTSKATIERAMQGVEQIGMKGVVIAKEIEAFVGDRLLEALWREALWLIQDDICHTETLDNVMRYSFGMRWAQMGLFETYRIAGGEAGMRHFLAQFGPCLKWPWTKFTDVVDLDDALVEKIGAQSDAQAAGRSIRELERIRDENLVGIMHALKSGNGGEGWGAGKLLADFEAKLWANARKPEADLGDVKPLRILDTKVSAAWVDYNGHMTEHRYLQVFGDTSDGVLRLIGVDLDYVRDGHSYYTVETHIRNLGDEASGEALYSTCQILSSDEKRLHIFSTIYNAATNEAVATAEQMMLHVDSKAGKAVAAPEAVLSKLRAITEAHAQLQTPDGAGRFVGQKRA.

The segment at 1-335 (MSFITKAACV…AKLWANARKP (335 aa)) is L-carnitine dehydrogenase. An NAD(+)-binding site is contributed by 11–16 (GGGVIG). An important for dehydrogenase activity region spans residues 330–335 (ANARKP). The interval 336 to 497 (EADLGDVKPL…AGRFVGQKRA (162 aa)) is betainyl-CoA thioesterase.

The protein in the N-terminal section; belongs to the 3-hydroxyacyl-CoA dehydrogenase family. L-carnitine dehydrogenase subfamily. It in the C-terminal section; belongs to the betainyl-CoA thioesterase family. In terms of assembly, homodimer.

Its subcellular location is the cytoplasm. The enzyme catalyses carnitine + NAD(+) = 3-dehydrocarnitine + NADH + H(+). It carries out the reaction N,N,N-trimethylglycyl-CoA + H2O = glycine betaine + CoA + H(+). It participates in amine and polyamine metabolism; carnitine metabolism. In terms of biological role, catalyzes the NAD(+)-dependent oxidation of L-carnitine to 3-dehydrocarnitine. Probably also catalyzes the cleavage of betainyl-CoA (N,N,N-trimethylglycyl-CoA) into glycine betaine and coenzyme A. Despite a high similarity to 3-hydroxyacyl-CoA dehydrogenases, cannot dehydrogenate 3-hydroxybutylate and 3-hydroxybutyl-CoA. Is probably involved in a L-carnitine degradation pathway that allows Rhizobium sp. YS-240 to grow on L-carnitine as the sole source of carbon and nitrogen. This is L-carnitine dehydrogenase/betainyl-CoA thioesterase from Rhizobium sp.